A 263-amino-acid chain; its full sequence is 3-deoxy-manno-octulosonate cytidylyltransferase (263 aa).

Belongs to the KdsB family.

The protein resides in the cytoplasm. The catalysed reaction is 3-deoxy-alpha-D-manno-oct-2-ulosonate + CTP = CMP-3-deoxy-beta-D-manno-octulosonate + diphosphate. It functions in the pathway nucleotide-sugar biosynthesis; CMP-3-deoxy-D-manno-octulosonate biosynthesis; CMP-3-deoxy-D-manno-octulosonate from 3-deoxy-D-manno-octulosonate and CTP: step 1/1. Its pathway is bacterial outer membrane biogenesis; lipopolysaccharide biosynthesis. In terms of biological role, activates KDO (a required 8-carbon sugar) for incorporation into bacterial lipopolysaccharide in Gram-negative bacteria. This chain is 3-deoxy-manno-octulosonate cytidylyltransferase, found in Burkholderia multivorans (strain ATCC 17616 / 249).